The primary structure comprises 473 residues: Proline--tRNA ligase (473 aa).

The protein belongs to the class-II aminoacyl-tRNA synthetase family. ProS type 3 subfamily. Homodimer.

It localises to the cytoplasm. It catalyses the reaction tRNA(Pro) + L-proline + ATP = L-prolyl-tRNA(Pro) + AMP + diphosphate. In terms of biological role, catalyzes the attachment of proline to tRNA(Pro) in a two-step reaction: proline is first activated by ATP to form Pro-AMP and then transferred to the acceptor end of tRNA(Pro). In Mesoplasma florum (strain ATCC 33453 / NBRC 100688 / NCTC 11704 / L1) (Acholeplasma florum), this protein is Proline--tRNA ligase.